The chain runs to 308 residues: GTP-binding protein RAD (308 aa).

The segment covering 1-15 (MTLNGGSGASGSRGA) has biased composition (gly residues). Residues 1-86 (MTLNGGSGAS…SDSLSSGGSG (86 aa)) form a disordered region. Arg-24 bears the Omega-N-methylarginine mark. Position 26 is a phosphoserine (Ser-26). Positions 57–82 (ATTAAGTRTQGQRLDWPEGSSDSLSS) are enriched in low complexity. Residues 98–105 (GAPGVGKS) and 203–206 (NKSD) contribute to the GTP site. A calmodulin-binding region spans residues 278–297 (AKRFLGRIVARNSRKMAFRA).

It belongs to the small GTPase superfamily. RGK family. As to quaternary structure, interacts with Calmodulin preferentially in the inactive, GDP-bound form. Interacts with CAMK2D. Interacts with CACNB2; interaction may be involved in beta-adrenergic regulation of heart rate and contractile force. Interaction with CACNB2 regulates the trafficking of CACNA1C to the cell membrane. In terms of processing, phosphorylation at Ser-26, Ser-39, Ser-273 and Ser-301 may be involved in regulating inhibition of voltage-gated L-type Ca(2+) channels.

The protein localises to the cell membrane. May regulate basal voltage-dependent L-type Ca(2+) currents and be required for beta-adrenergic augmentation of Ca(2+) influx in cardiomyocytes, thereby regulating increases in heart rate and contractile force. May play an important role in cardiac antiarrhythmia via the strong suppression of voltage-dependent L-type Ca(2+) currents. Regulates voltage-gated L-type calcium channel subunit alpha-1C trafficking to the cell membrane. Inhibits cardiac hypertrophy through the calmodulin-dependent kinase II (CaMKII) pathway. Inhibits phosphorylation and activation of CAMK2D. The sequence is that of GTP-binding protein RAD (Rrad) from Mus musculus (Mouse).